We begin with the raw amino-acid sequence, 507 residues long: Cytochrome P450 52A7 (507 aa).

Residues L6–I26 traverse the membrane as a helical segment. Residue C456 coordinates heme.

Belongs to the cytochrome P450 family. Heme is required as a cofactor.

It localises to the membrane. Its function is as follows. Together with an NADPH cytochrome P450 the enzyme system catalyzes the terminal hydroxylation as the first step in the assimilation of alkanes and fatty acids. Preferentially hydroxylates lauric acid. The protein is Cytochrome P450 52A7 (CYP52A7) of Candida tropicalis (Yeast).